We begin with the raw amino-acid sequence, 82 residues long: Sulfur carrier protein TusA (82 aa).

The active-site Cysteine persulfide intermediate is the C19.

This sequence belongs to the sulfur carrier protein TusA family.

Its subcellular location is the cytoplasm. Sulfur carrier protein which probably makes part of a sulfur-relay system. This chain is Sulfur carrier protein TusA, found in Vibrio campbellii (strain ATCC BAA-1116).